The following is a 358-amino-acid chain: NADH-quinone oxidoreductase subunit H (358 aa).

Transmembrane regions (helical) follow at residues 29–49 (LIKI…LTLW), 95–115 (GLFY…WAVI), 130–150 (LLLV…AGWA), 176–196 (FCFL…IVAV), 206–226 (GLGF…VYLI), 258–280 (GFAI…AVVM), 297–317 (GWIW…WIRA), and 334–354 (IFIP…LSPW).

This sequence belongs to the complex I subunit 1 family. As to quaternary structure, NDH-1 is composed of 14 different subunits. Subunits NuoA, H, J, K, L, M, N constitute the membrane sector of the complex.

It localises to the cell inner membrane. The enzyme catalyses a quinone + NADH + 5 H(+)(in) = a quinol + NAD(+) + 4 H(+)(out). Its function is as follows. NDH-1 shuttles electrons from NADH, via FMN and iron-sulfur (Fe-S) centers, to quinones in the respiratory chain. The immediate electron acceptor for the enzyme in this species is believed to be ubiquinone. Couples the redox reaction to proton translocation (for every two electrons transferred, four hydrogen ions are translocated across the cytoplasmic membrane), and thus conserves the redox energy in a proton gradient. This subunit may bind ubiquinone. The chain is NADH-quinone oxidoreductase subunit H from Acidovorax sp. (strain JS42).